The following is a 599-amino-acid chain: UvrABC system protein C (599 aa).

A GIY-YIG domain is found at 18 to 96 (QLPGVYKMLG…IKQHRPPYNI (79 aa)). Residues 207–242 (KELNQELIAKMEQAAADLEFEKAVFYRDRLSLLREV) form the UVR domain.

This sequence belongs to the UvrC family. As to quaternary structure, interacts with UvrB in an incision complex.

The protein localises to the cytoplasm. In terms of biological role, the UvrABC repair system catalyzes the recognition and processing of DNA lesions. UvrC both incises the 5' and 3' sides of the lesion. The N-terminal half is responsible for the 3' incision and the C-terminal half is responsible for the 5' incision. In Acinetobacter baumannii (strain SDF), this protein is UvrABC system protein C.